We begin with the raw amino-acid sequence, 156 residues long: Small ribosomal subunit protein uS7 (156 aa).

Belongs to the universal ribosomal protein uS7 family. Part of the 30S ribosomal subunit. Contacts proteins S9 and S11.

One of the primary rRNA binding proteins, it binds directly to 16S rRNA where it nucleates assembly of the head domain of the 30S subunit. Is located at the subunit interface close to the decoding center, probably blocks exit of the E-site tRNA. The chain is Small ribosomal subunit protein uS7 from Shewanella sp. (strain MR-7).